A 200-amino-acid chain; its full sequence is dITP/XTP pyrophosphatase (200 aa).

7 to 12 is a substrate binding site; that stretch reads TSNKHK. The Mg(2+) site is built by Glu-38 and Asp-73. Asp-73 (proton acceptor) is an active-site residue. Substrate contacts are provided by residues Ser-74, 154-157, Lys-177, and 182-183; these read FGYD and HR.

The protein belongs to the HAM1 NTPase family. In terms of assembly, homodimer. Requires Mg(2+) as cofactor.

The catalysed reaction is XTP + H2O = XMP + diphosphate + H(+). It carries out the reaction dITP + H2O = dIMP + diphosphate + H(+). It catalyses the reaction ITP + H2O = IMP + diphosphate + H(+). Its function is as follows. Pyrophosphatase that catalyzes the hydrolysis of nucleoside triphosphates to their monophosphate derivatives, with a high preference for the non-canonical purine nucleotides XTP (xanthosine triphosphate), dITP (deoxyinosine triphosphate) and ITP. Seems to function as a house-cleaning enzyme that removes non-canonical purine nucleotides from the nucleotide pool, thus preventing their incorporation into DNA/RNA and avoiding chromosomal lesions. The polypeptide is dITP/XTP pyrophosphatase (Campylobacter jejuni subsp. doylei (strain ATCC BAA-1458 / RM4099 / 269.97)).